The chain runs to 578 residues: Isocitrate dehydrogenase kinase/phosphatase (578 aa).

ATP-binding positions include 315–321 (APGIRGM) and K336. D371 is a catalytic residue.

This sequence belongs to the AceK family.

It localises to the cytoplasm. It carries out the reaction L-seryl-[isocitrate dehydrogenase] + ATP = O-phospho-L-seryl-[isocitrate dehydrogenase] + ADP + H(+). Its function is as follows. Bifunctional enzyme which can phosphorylate or dephosphorylate isocitrate dehydrogenase (IDH) on a specific serine residue. This is a regulatory mechanism which enables bacteria to bypass the Krebs cycle via the glyoxylate shunt in response to the source of carbon. When bacteria are grown on glucose, IDH is fully active and unphosphorylated, but when grown on acetate or ethanol, the activity of IDH declines drastically concomitant with its phosphorylation. This is Isocitrate dehydrogenase kinase/phosphatase from Escherichia coli O17:K52:H18 (strain UMN026 / ExPEC).